We begin with the raw amino-acid sequence, 118 residues long: Small ribosomal subunit protein uS13 (118 aa).

Positions 93 to 118 (RNLPVRGQNTKNNARTRKGPTRPLKR) are disordered. Basic residues predominate over residues 106–118 (ARTRKGPTRPLKR).

Belongs to the universal ribosomal protein uS13 family. In terms of assembly, part of the 30S ribosomal subunit. Forms a loose heterodimer with protein S19. Forms two bridges to the 50S subunit in the 70S ribosome.

In terms of biological role, located at the top of the head of the 30S subunit, it contacts several helices of the 16S rRNA. In the 70S ribosome it contacts the 23S rRNA (bridge B1a) and protein L5 of the 50S subunit (bridge B1b), connecting the 2 subunits; these bridges are implicated in subunit movement. Contacts the tRNAs in the A and P-sites. The protein is Small ribosomal subunit protein uS13 of Psychrobacter cryohalolentis (strain ATCC BAA-1226 / DSM 17306 / VKM B-2378 / K5).